A 277-amino-acid polypeptide reads, in one-letter code: Bifunctional protein FolD (277 aa).

NADP(+)-binding positions include Gly160–Ser162, Ser185, and Ile226.

The protein belongs to the tetrahydrofolate dehydrogenase/cyclohydrolase family. In terms of assembly, homodimer.

The enzyme catalyses (6R)-5,10-methylene-5,6,7,8-tetrahydrofolate + NADP(+) = (6R)-5,10-methenyltetrahydrofolate + NADPH. It catalyses the reaction (6R)-5,10-methenyltetrahydrofolate + H2O = (6R)-10-formyltetrahydrofolate + H(+). It participates in one-carbon metabolism; tetrahydrofolate interconversion. Functionally, catalyzes the oxidation of 5,10-methylenetetrahydrofolate to 5,10-methenyltetrahydrofolate and then the hydrolysis of 5,10-methenyltetrahydrofolate to 10-formyltetrahydrofolate. This is Bifunctional protein FolD from Ruthia magnifica subsp. Calyptogena magnifica.